An 839-amino-acid polypeptide reads, in one-letter code: Protein translocase subunit SecA (839 aa).

ATP contacts are provided by residues Gln-85, 103 to 107 (GEGKT), and Asp-493. A compositionally biased stretch (basic and acidic residues) spans 780 to 790 (QIHEQERERAS). The interval 780–839 (QIHEQERERASQRATTAAPQNIQSQQSANTDDLPKVERNEACPCGSGKKFKNCHGRKSFS) is disordered. The span at 791–809 (QRATTAAPQNIQSQQSANT) shows a compositional bias: polar residues. 4 residues coordinate Zn(2+): Cys-821, Cys-823, Cys-832, and His-833. Positions 827 to 839 (KKFKNCHGRKSFS) are enriched in basic residues.

The protein belongs to the SecA family. Monomer and homodimer. Part of the essential Sec protein translocation apparatus which comprises SecA, SecYEG and auxiliary proteins SecDF. Other proteins may also be involved. It depends on Zn(2+) as a cofactor.

Its subcellular location is the cell membrane. The protein localises to the cytoplasm. The catalysed reaction is ATP + H2O + cellular proteinSide 1 = ADP + phosphate + cellular proteinSide 2.. Its function is as follows. Part of the Sec protein translocase complex. Interacts with the SecYEG preprotein conducting channel. Has a central role in coupling the hydrolysis of ATP to the transfer of proteins into and across the cell membrane, serving as an ATP-driven molecular motor driving the stepwise translocation of polypeptide chains across the membrane. This is Protein translocase subunit SecA from Streptococcus pyogenes serotype M28 (strain MGAS6180).